Consider the following 776-residue polypeptide: Protein STRUBBELIG-RECEPTOR FAMILY 3 (776 aa).

The first 29 residues, 1–29 (MAAKRSIYCLLLLPLLLSLLIWIPSISLA), serve as a signal peptide directing secretion. Residues 30 to 35 (ATNPDD) are Cytoplasmic-facing. A helical membrane pass occupies residues 36–56 (VAAINGLFAALGAPVLPGWIA). The Extracellular portion of the chain corresponds to 57–316 (SGGDPCGEAW…KGKNSSHTKK (260 aa)). N-linked (GlcNAc...) asparagine glycosylation occurs at Asn72. 6 LRR repeats span residues 99–120 (SIRG…TLPV), 121–143 (TLQH…LGTL), 145–167 (FLND…FQNL), 169–191 (GLIN…MENL), 193–215 (TLTT…QGLP), and 216–236 (LQDL…KLLS). A glycan (N-linked (GlcNAc...) asparagine) is linked at Asn179. N-linked (GlcNAc...) asparagine glycans are attached at residues Asn248 and Asn253. The disordered stretch occupies residues 251-311 (MINSTSTAPS…SSENSKGKNS (61 aa)). Residues 254-268 (STSTAPSLSPSLSPT) are compositionally biased toward low complexity. Positions 269–284 (KPAPTRPFSGVPPPPN) are enriched in pro residues. A compositionally biased stretch (low complexity) spans 298–309 (SEGSSSENSKGK). Asn310 carries an N-linked (GlcNAc...) asparagine glycan. A helical membrane pass occupies residues 317–337 (IILIAFAGVLVFIILVLAILL). At 338-776 (LLPKCARRRE…RHGSGDSTAD (439 aa)) the chain is on the cytoplasmic side. A disordered region spans residues 355–440 (PHQVGADRGS…PPPPPPPPPP (86 aa)). The span at 381 to 407 (RSEKVQREPFKKAGEEPKVLHDLERLR) shows a compositional bias: basic and acidic residues. Residues 426–440 (MPPPPPPPPPPPPPP) show a composition bias toward pro residues. Positions 485–763 (FAQENLIGSG…EVVQDLLDMI (279 aa)) constitute a Protein kinase domain. Residues 491 to 499 (IGSGMLGSV) and Lys513 contribute to the ATP site.

The protein belongs to the protein kinase superfamily. Ser/Thr protein kinase family. In terms of tissue distribution, expressed in seedlings, roots, stems, leaves, flowers and siliques.

Its subcellular location is the membrane. Functionally, not essential for epidermal patterning and not redundant with STRUBBELIG. In Arabidopsis thaliana (Mouse-ear cress), this protein is Protein STRUBBELIG-RECEPTOR FAMILY 3 (SRF3).